The following is a 67-amino-acid chain: Neurotoxin Cex10 (67 aa).

Residues 1-65 (KDGYLVEVTG…TWPLPNKSCG (65 aa)) enclose the LCN-type CS-alpha/beta domain. Disulfide bonds link cysteine 11–cysteine 64, cysteine 15–cysteine 40, cysteine 24–cysteine 45, and cysteine 28–cysteine 47. Cysteine 64 is modified (cysteine amide). Positions 65-67 (GKK) are excised as a propeptide.

This sequence belongs to the long (4 C-C) scorpion toxin superfamily. Sodium channel inhibitor family. Beta subfamily. In terms of tissue distribution, expressed by the venom gland.

The protein localises to the secreted. In terms of biological role, beta toxins bind voltage-independently at site-4 of sodium channels (Nav) and shift the voltage of activation toward more negative potentials thereby affecting sodium channel activation and promoting spontaneous and repetitive firing. The chain is Neurotoxin Cex10 from Centruroides exilicauda (Bark scorpion).